Reading from the N-terminus, the 118-residue chain is Large ribosomal subunit protein bL20 (118 aa).

The protein belongs to the bacterial ribosomal protein bL20 family.

Functionally, binds directly to 23S ribosomal RNA and is necessary for the in vitro assembly process of the 50S ribosomal subunit. It is not involved in the protein synthesizing functions of that subunit. This chain is Large ribosomal subunit protein bL20, found in Clostridioides difficile (strain 630) (Peptoclostridium difficile).